The sequence spans 365 residues: tRNA/tmRNA (uracil-C(5))-methyltransferase (365 aa).

S-adenosyl-L-methionine is bound by residues Gln-189, Tyr-217, Asn-222, Glu-238, and Asp-298. Cys-323 acts as the Nucleophile in catalysis. Glu-357 serves as the catalytic Proton acceptor.

Belongs to the class I-like SAM-binding methyltransferase superfamily. RNA M5U methyltransferase family. TrmA subfamily.

The enzyme catalyses uridine(54) in tRNA + S-adenosyl-L-methionine = 5-methyluridine(54) in tRNA + S-adenosyl-L-homocysteine + H(+). It catalyses the reaction uridine(341) in tmRNA + S-adenosyl-L-methionine = 5-methyluridine(341) in tmRNA + S-adenosyl-L-homocysteine + H(+). In terms of biological role, dual-specificity methyltransferase that catalyzes the formation of 5-methyluridine at position 54 (m5U54) in all tRNAs, and that of position 341 (m5U341) in tmRNA (transfer-mRNA). This is tRNA/tmRNA (uracil-C(5))-methyltransferase from Shewanella halifaxensis (strain HAW-EB4).